Reading from the N-terminus, the 245-residue chain is tRNA1(Val) (adenine(37)-N6)-methyltransferase (245 aa).

The protein belongs to the methyltransferase superfamily. tRNA (adenine-N(6)-)-methyltransferase family.

It localises to the cytoplasm. The enzyme catalyses adenosine(37) in tRNA1(Val) + S-adenosyl-L-methionine = N(6)-methyladenosine(37) in tRNA1(Val) + S-adenosyl-L-homocysteine + H(+). In terms of biological role, specifically methylates the adenine in position 37 of tRNA(1)(Val) (anticodon cmo5UAC). This is tRNA1(Val) (adenine(37)-N6)-methyltransferase from Shigella boydii serotype 18 (strain CDC 3083-94 / BS512).